We begin with the raw amino-acid sequence, 190 residues long: dITP/XTP pyrophosphatase (190 aa).

Ser-7–Lys-12 provides a ligand contact to substrate. Asp-68 acts as the Proton acceptor in catalysis. Asp-68 provides a ligand contact to Mg(2+). Substrate contacts are provided by residues Thr-69, Phe-148–Asp-151, Lys-171, and His-176–Arg-177.

This sequence belongs to the HAM1 NTPase family. Homodimer. Requires Mg(2+) as cofactor.

The catalysed reaction is XTP + H2O = XMP + diphosphate + H(+). It catalyses the reaction dITP + H2O = dIMP + diphosphate + H(+). The enzyme catalyses ITP + H2O = IMP + diphosphate + H(+). In terms of biological role, pyrophosphatase that catalyzes the hydrolysis of nucleoside triphosphates to their monophosphate derivatives, with a high preference for the non-canonical purine nucleotides XTP (xanthosine triphosphate), dITP (deoxyinosine triphosphate) and ITP. Seems to function as a house-cleaning enzyme that removes non-canonical purine nucleotides from the nucleotide pool, thus preventing their incorporation into DNA/RNA and avoiding chromosomal lesions. The protein is dITP/XTP pyrophosphatase of Flavobacterium psychrophilum (strain ATCC 49511 / DSM 21280 / CIP 103535 / JIP02/86).